A 378-amino-acid polypeptide reads, in one-letter code: MLYFLLYEQLHRYISPFRVFSYTTVRTAFASLTALFLCIALGPWLINKLREFQIGQYIREEGPKSHQKKAGTPTMGGVLIVISIVIPTLLWADLRYPYVWIALAGLLGYGWIGFLDDYAKVTKQRNLGLSGKRKLVYQFIMGFAFAASLLVMRAYGDFSTTMNIPFLKQFKPSLLMTSMMANPWTYVIGVAPFCIFVALVVVFYSNAVNLTDGLDGLAIGLMVIAAGALTVLAYAGGHAQLAQYLQLARNPRTSELTIFCGSMTGASLGFLWYNAHPAEIFMGDVGSLGLGGAMAVVAVLIKQEILLLFIGGIFVLEAFSVILQVGSYKLRHGKRIFKMAPLHHHFEALGWTESKIIARFWIAGLVLALFALTTLKLR.

10 helical membrane-spanning segments follow: residues Thr-27–Asn-47, Thr-74–Leu-94, Tyr-96–Asp-116, Leu-135–Tyr-155, Trp-184–Tyr-204, Gly-216–Gly-236, Leu-256–His-276, Ile-280–Leu-300, Ile-305–Val-325, and Lys-355–Leu-375.

It belongs to the glycosyltransferase 4 family. MraY subfamily. The cofactor is Mg(2+).

It localises to the cell inner membrane. It catalyses the reaction UDP-N-acetyl-alpha-D-muramoyl-L-alanyl-gamma-D-glutamyl-meso-2,6-diaminopimeloyl-D-alanyl-D-alanine + di-trans,octa-cis-undecaprenyl phosphate = di-trans,octa-cis-undecaprenyl diphospho-N-acetyl-alpha-D-muramoyl-L-alanyl-D-glutamyl-meso-2,6-diaminopimeloyl-D-alanyl-D-alanine + UMP. It functions in the pathway cell wall biogenesis; peptidoglycan biosynthesis. Catalyzes the initial step of the lipid cycle reactions in the biosynthesis of the cell wall peptidoglycan: transfers peptidoglycan precursor phospho-MurNAc-pentapeptide from UDP-MurNAc-pentapeptide onto the lipid carrier undecaprenyl phosphate, yielding undecaprenyl-pyrophosphoryl-MurNAc-pentapeptide, known as lipid I. The sequence is that of Phospho-N-acetylmuramoyl-pentapeptide-transferase from Solibacter usitatus (strain Ellin6076).